The sequence spans 448 residues: CCA-adding enzyme (448 aa).

ATP contacts are provided by Ser-52 and Lys-55. Ser-52 and Lys-55 together coordinate CTP. The Mg(2+) site is built by Asp-64, Asp-66, and Asp-118. Residues His-141, Lys-160, and Tyr-169 each contribute to the ATP site. Positions 141, 160, and 169 each coordinate CTP.

Belongs to the tRNA nucleotidyltransferase/poly(A) polymerase family. Archaeal CCA-adding enzyme subfamily. As to quaternary structure, homodimer. Requires Mg(2+) as cofactor.

It carries out the reaction a tRNA precursor + 2 CTP + ATP = a tRNA with a 3' CCA end + 3 diphosphate. The enzyme catalyses a tRNA with a 3' CCA end + 2 CTP + ATP = a tRNA with a 3' CCACCA end + 3 diphosphate. In terms of biological role, catalyzes the addition and repair of the essential 3'-terminal CCA sequence in tRNAs without using a nucleic acid template. Adds these three nucleotides in the order of C, C, and A to the tRNA nucleotide-73, using CTP and ATP as substrates and producing inorganic pyrophosphate. tRNA 3'-terminal CCA addition is required both for tRNA processing and repair. Also involved in tRNA surveillance by mediating tandem CCA addition to generate a CCACCA at the 3' terminus of unstable tRNAs. While stable tRNAs receive only 3'-terminal CCA, unstable tRNAs are marked with CCACCA and rapidly degraded. In Pyrococcus abyssi (strain GE5 / Orsay), this protein is CCA-adding enzyme.